The sequence spans 150 residues: Anthranilate synthase component 1 (150 aa).

Serine 40 contacts L-tryptophan. Arginine 119 serves as a coordination point for chorismate.

The protein belongs to the anthranilate synthase component I family. In terms of assembly, heterotetramer consisting of two non-identical subunits: a beta subunit (TrpG) and a large alpha subunit (TrpE). Mg(2+) serves as cofactor.

The enzyme catalyses chorismate + L-glutamine = anthranilate + pyruvate + L-glutamate + H(+). It participates in amino-acid biosynthesis; L-tryptophan biosynthesis; L-tryptophan from chorismate: step 1/5. With respect to regulation, feedback inhibited by tryptophan. Its function is as follows. Part of a heterotetrameric complex that catalyzes the two-step biosynthesis of anthranilate, an intermediate in the biosynthesis of L-tryptophan. In the first step, the glutamine-binding beta subunit (TrpG) of anthranilate synthase (AS) provides the glutamine amidotransferase activity which generates ammonia as a substrate that, along with chorismate, is used in the second step, catalyzed by the large alpha subunit of AS (TrpE) to produce anthranilate. In the absence of TrpG, TrpE can synthesize anthranilate directly from chorismate and high concentrations of ammonia. The protein is Anthranilate synthase component 1 (trpE) of Citrobacter freundii.